The sequence spans 256 residues: Diaminopimelate epimerase (256 aa).

Residues Asn11 and Asn63 each contribute to the substrate site. The active-site Proton donor is Cys72. Substrate is bound by residues 73 to 74 (GN), Asn169, and 187 to 188 (ER). The active-site Proton acceptor is Cys197. 198–199 (GT) provides a ligand contact to substrate.

The protein belongs to the diaminopimelate epimerase family. As to quaternary structure, homodimer.

Its subcellular location is the cytoplasm. The catalysed reaction is (2S,6S)-2,6-diaminopimelate = meso-2,6-diaminopimelate. Its pathway is amino-acid biosynthesis; L-lysine biosynthesis via DAP pathway; DL-2,6-diaminopimelate from LL-2,6-diaminopimelate: step 1/1. Its function is as follows. Catalyzes the stereoinversion of LL-2,6-diaminopimelate (L,L-DAP) to meso-diaminopimelate (meso-DAP), a precursor of L-lysine and an essential component of the bacterial peptidoglycan. This chain is Diaminopimelate epimerase, found in Flavobacterium psychrophilum (strain ATCC 49511 / DSM 21280 / CIP 103535 / JIP02/86).